The chain runs to 133 residues: NAD(P)H-quinone oxidoreductase subunit 3 (133 aa).

A run of 3 helical transmembrane segments spans residues 22–44 (YLLGFLLISSLVPILSLTASRLL), 77–97 (MFALVFVIFDVETVFLYPWAV), and 102–122 (LGLLAFVEALIFITILVVGLA).

The protein belongs to the complex I subunit 3 family. As to quaternary structure, NDH-1 can be composed of about 15 different subunits; different subcomplexes with different compositions have been identified which probably have different functions.

It is found in the cellular thylakoid membrane. It carries out the reaction a plastoquinone + NADH + (n+1) H(+)(in) = a plastoquinol + NAD(+) + n H(+)(out). It catalyses the reaction a plastoquinone + NADPH + (n+1) H(+)(in) = a plastoquinol + NADP(+) + n H(+)(out). Its function is as follows. NDH-1 shuttles electrons from an unknown electron donor, via FMN and iron-sulfur (Fe-S) centers, to quinones in the respiratory and/or the photosynthetic chain. The immediate electron acceptor for the enzyme in this species is believed to be plastoquinone. Couples the redox reaction to proton translocation, and thus conserves the redox energy in a proton gradient. Cyanobacterial NDH-1 also plays a role in inorganic carbon-concentration. The protein is NAD(P)H-quinone oxidoreductase subunit 3 of Synechococcus sp. (strain ATCC 27144 / PCC 6301 / SAUG 1402/1) (Anacystis nidulans).